A 333-amino-acid chain; its full sequence is Geranylgeranyl pyrophosphate synthase olcC (333 aa).

3 residues coordinate isopentenyl diphosphate: K61, R64, and H93. Mg(2+)-binding residues include D100 and D104. R109 is a dimethylallyl diphosphate binding site. Residue R110 coordinates isopentenyl diphosphate. Residues K187, T188, and Q221 each coordinate dimethylallyl diphosphate. Position 224 (D224) interacts with Mg(2+). The dimethylallyl diphosphate site is built by N228, K238, and K248.

The protein belongs to the FPP/GGPP synthase family. Requires Mg(2+) as cofactor.

The catalysed reaction is isopentenyl diphosphate + dimethylallyl diphosphate = (2E)-geranyl diphosphate + diphosphate. It catalyses the reaction isopentenyl diphosphate + (2E)-geranyl diphosphate = (2E,6E)-farnesyl diphosphate + diphosphate. It carries out the reaction isopentenyl diphosphate + (2E,6E)-farnesyl diphosphate = (2E,6E,10E)-geranylgeranyl diphosphate + diphosphate. It functions in the pathway secondary metabolite biosynthesis; terpenoid biosynthesis. Geranylgeranyl pyrophosphate synthase; part of the gene cluster that mediates the biosynthesis of 15-deoxyoxalicine B. The first step of the pathway is the synthesis of nicotinyl-CoA from nicotinic acid by the nicotinic acid-CoA ligase olcI. Nicotinyl-CoA is then a substrate of polyketide synthase olcA to produce 4-hydroxy-6-(3-pyridinyl)-2H-pyran-2-one (HPPO) which is further prenylated by the polyprenyl transferase olcH to yield geranylgeranyl-HPPO. Geranylgeranyl pyrophosphate is provided by the cluster-specific geranylgeranyl pyrophosphate synthase olcC. The FAD-dependent monooxygenase olcE catalyzes the epoxidation of geranylgeranyl-HPPO and the terpene cyclase olcD catalyzes the cyclization of the terpenoid component, resulting in the formation of the tricyclic terpene moiety seen in predecaturin E. The cytochrome P450 monooxygenase then catalyzes the allylic oxidation of predecaturin E, which is followed by spirocylization with concomitant loss of one molecule of water to form decaturin E. Decaturin E is the substrate of the cytochrome P450 monooxygenase olcJ which hydroxylates it at the C-29 position to form decaturin F. The short-chain dehydrogenase/reductase olcF may catalyze the oxidation of decaturin F to generate the 29-hydroxyl-27-one intermediate, and subsequent hemiacetal formation probably leads to the formation of decaturin C. The dioxygenase olcK may be a peroxisomal enzyme that catalyzes the hydroxylation of decaturin C into decaturin A once decaturin C is shuttled into the peroxisome by the MFS transporter olcL. Finally the cytochrome P450 monooxygenase olcB catalyzes the oxidative rearrangement to yield 15-deoxyoxalicine B. In the absence of olcJ, decaturin E may be shunted to a pathway in which it is oxidized to a ketone, possibly by olcF, to form decaturin D, which undergoes further allylic oxidation to yield decaturin G. Moreover, in the absence of oclK or oclL, oclB can convert decaturin C into 15-deoxyoxalicine A. This chain is Geranylgeranyl pyrophosphate synthase olcC, found in Penicillium canescens.